The chain runs to 310 residues: tRNA pseudouridine synthase B (310 aa).

D47 functions as the Nucleophile in the catalytic mechanism.

This sequence belongs to the pseudouridine synthase TruB family. Type 1 subfamily.

The catalysed reaction is uridine(55) in tRNA = pseudouridine(55) in tRNA. Responsible for synthesis of pseudouridine from uracil-55 in the psi GC loop of transfer RNAs. The chain is tRNA pseudouridine synthase B from Caulobacter vibrioides (strain ATCC 19089 / CIP 103742 / CB 15) (Caulobacter crescentus).